Consider the following 512-residue polypeptide: NAD(P) transhydrogenase subunit alpha (512 aa).

Over 1–400 (MLIGVPRELL…KESKPTDPRV (400 aa)) the chain is Cytoplasmic. Residues 125–128 (QALD), Val175, 195–197 (DSR), and Gly225 contribute to the NAD(+) site. A disordered region spans residues 375–394 (SAQPKQETKAAPVAEKKESK). A run of 2 helical transmembrane segments spans residues 401-421 (KYGVMAGVGVLFLWLASVAPA) and 422-442 (AFLSHFTVFVLACVVGYYVVW). The Cytoplasmic portion of the chain corresponds to 443-451 (NVSHALHTP). A helical membrane pass occupies residues 452–472 (LMAVTNAISGIIIVGALLQIR). Residues 473 to 478 (QPTGNL) lie on the Periplasmic side of the membrane. Residues 479 to 499 (FIDALAFVAILVASINIFGGF) form a helical membrane-spanning segment. The Cytoplasmic portion of the chain corresponds to 500 to 512 (RVTQRMLAMFRKG).

This sequence belongs to the AlaDH/PNT family. As to quaternary structure, heterodimer of an alpha (PntA) and a beta (PntB) chain.

The protein localises to the cell inner membrane. It catalyses the reaction NAD(+) + NADPH + H(+)(in) = NADH + NADP(+) + H(+)(out). The transhydrogenation between NADH and NADP is coupled to respiration and ATP hydrolysis and functions as a proton pump across the membrane. In Haemophilus influenzae (strain ATCC 51907 / DSM 11121 / KW20 / Rd), this protein is NAD(P) transhydrogenase subunit alpha (pntA).